Consider the following 227-residue polypeptide: PKHD-type hydroxylase BamMC406_5004 (227 aa).

The Fe2OG dioxygenase domain occupies Gln80–Ser179. The Fe cation site is built by His98, Asp100, and His160. Arg170 contributes to the 2-oxoglutarate binding site.

It depends on Fe(2+) as a cofactor. The cofactor is L-ascorbate.

This Burkholderia ambifaria (strain MC40-6) protein is PKHD-type hydroxylase BamMC406_5004.